The sequence spans 377 residues: uncharacterized protein (377 aa).

The next 10 membrane-spanning stretches (helical) occupy residues 4 to 24, 41 to 61, 85 to 105, 134 to 154, 159 to 179, 192 to 212, 278 to 298, 301 to 321, 327 to 347, and 356 to 376; these read LLTP…LLGT, ASFG…FPIT, IAAL…FLFG, FHAM…IATV, VYVH…PFLL, GAVG…IALA, VFGI…AGFV, GVGY…DLVV, IASV…AIGL, and LCFF…PVLK.

It to R.meliloti MosC.

It localises to the cell membrane. In terms of biological role, could be involved in a transport system. This is an uncharacterized protein from Sinorhizobium fredii (strain NBRC 101917 / NGR234).